The primary structure comprises 541 residues: Chaperonin GroEL 1 (541 aa).

ATP contacts are provided by residues 29 to 32, 86 to 90, Gly-413, and Asp-492; these read TLGP and DGTTT.

The protein belongs to the chaperonin (HSP60) family. As to quaternary structure, forms a cylinder of 14 subunits composed of two heptameric rings stacked back-to-back. Interacts with the co-chaperonin GroES.

The protein resides in the cytoplasm. The enzyme catalyses ATP + H2O + a folded polypeptide = ADP + phosphate + an unfolded polypeptide.. Its function is as follows. Together with its co-chaperonin GroES, plays an essential role in assisting protein folding. The GroEL-GroES system forms a nano-cage that allows encapsulation of the non-native substrate proteins and provides a physical environment optimized to promote and accelerate protein folding. In Rhodococcus jostii (strain RHA1), this protein is Chaperonin GroEL 1.